Here is a 270-residue protein sequence, read N- to C-terminus: Splicing factor YJU2 (270 aa).

The disordered stretch occupies residues 1–32 (MSERKVLNKYIPPDYDPSIRPPKKKKKFQGPN). Cysteine 48, cysteine 51, cysteine 84, and cysteine 87 together coordinate Zn(2+). Residues 251–270 (PNFQPPKYAKRKMEKKKVLV) form a disordered region. Positions 258-270 (YAKRKMEKKKVLV) are enriched in basic residues.

The protein belongs to the CWC16 family. YJU2 subfamily. Component of the spliceosome. Present in the activated B complex, the catalytically activated B* complex which catalyzes the branching, the catalytic step 1 C complex catalyzing the exon ligation, and the postcatalytic P complex containing the ligated exons (mRNA) and the excised lariat intron. Belongs to the 40S cdc5-associated complex (or cwf complex), a spliceosome sub-complex reminiscent of a late-stage spliceosome composed of the U2, U5 and U6 snRNAs and at least brr2, cdc5, cwf2/prp3, cwf3/syf1, cwf4/syf3, cwf5/ecm2, spp42/cwf6, cwf7/spf27, cwf8, cwf9, cwf10, cwf11, cwf12, prp45/cwf13, cwf14, cwf15, cwf16, cwf17, cwf18, cwf19, cwf20, cwf21, cwf22, cwf23, cwf24, cwf25, cwf26, cyp7/cwf27, cwf28, cwf29/ist3, lea1, msl1, prp5/cwf1, prp10, prp12/sap130, prp17, prp22, sap61, sap62, sap114, sap145, slu7, smb1, smd1, smd3, smf1, smg1 and syf2.

The protein resides in the nucleus. Its function is as follows. Part of the spliceosome which catalyzes two sequential transesterification reactions, first the excision of the non-coding intron from pre-mRNA and then the ligation of the coding exons to form the mature mRNA. Plays a role in stabilizing the structure of the spliceosome catalytic core and docking of the branch helix into the active site, producing 5'-exon and lariat intron-3'-intermediates. The polypeptide is Splicing factor YJU2 (cwf16) (Schizosaccharomyces pombe (strain 972 / ATCC 24843) (Fission yeast)).